Here is a 340-residue protein sequence, read N- to C-terminus: Fructoselysine 6-phosphate deglycase (340 aa).

2 consecutive SIS domains span residues 35–169 and 201–331; these read IVEE…RLAP and LGEL…PDER.

Homododecamer.

It catalyses the reaction N(6)-(6-phospho-D-fructosyl)-L-lysine + H2O = D-glucose 6-phosphate + L-lysine. The protein operates within carbohydrate metabolism; fructoselysine degradation; D-glucose 6-phosphate and lysine from fructoselysine: step 2/2. Its activity is regulated as follows. Strongly inhibited by ZnCl(2). Catalyzes the reversible conversion of fructoselysine 6-phosphate to glucose 6-phosphate and lysine. Functions in a fructoselysine degradation pathway that allows E.coli to grow on fructoselysine or psicoselysine. This is Fructoselysine 6-phosphate deglycase from Escherichia coli (strain K12).